The chain runs to 340 residues: Phosphoribosylformylglycinamidine cyclo-ligase (340 aa).

The protein belongs to the AIR synthase family.

The protein localises to the cytoplasm. The enzyme catalyses 2-formamido-N(1)-(5-O-phospho-beta-D-ribosyl)acetamidine + ATP = 5-amino-1-(5-phospho-beta-D-ribosyl)imidazole + ADP + phosphate + H(+). It participates in purine metabolism; IMP biosynthesis via de novo pathway; 5-amino-1-(5-phospho-D-ribosyl)imidazole from N(2)-formyl-N(1)-(5-phospho-D-ribosyl)glycinamide: step 2/2. This is Phosphoribosylformylglycinamidine cyclo-ligase from Streptococcus mutans serotype c (strain ATCC 700610 / UA159).